The following is an 87-amino-acid chain: Phosphoribosyl-ATP pyrophosphatase (87 aa).

The protein belongs to the PRA-PH family.

The protein localises to the cytoplasm. The enzyme catalyses 1-(5-phospho-beta-D-ribosyl)-ATP + H2O = 1-(5-phospho-beta-D-ribosyl)-5'-AMP + diphosphate + H(+). The protein operates within amino-acid biosynthesis; L-histidine biosynthesis; L-histidine from 5-phospho-alpha-D-ribose 1-diphosphate: step 2/9. The sequence is that of Phosphoribosyl-ATP pyrophosphatase from Clavibacter sepedonicus (Clavibacter michiganensis subsp. sepedonicus).